The sequence spans 224 residues: 2-phospho-L-lactate guanylyltransferase (224 aa).

The protein belongs to the CofC family. In terms of assembly, homodimer.

The catalysed reaction is (2S)-2-phospholactate + GTP + H(+) = (2S)-lactyl-2-diphospho-5'-guanosine + diphosphate. The protein operates within cofactor biosynthesis; coenzyme F420 biosynthesis. Functionally, guanylyltransferase that catalyzes the activation of (2S)-2-phospholactate (2-PL) as (2S)-lactyl-2-diphospho-5'-guanosine, via the condensation of 2-PL with GTP. It is involved in the biosynthesis of coenzyme F420, a hydride carrier cofactor. The protein is 2-phospho-L-lactate guanylyltransferase of Methanobrevibacter smithii (strain ATCC 35061 / DSM 861 / OCM 144 / PS).